We begin with the raw amino-acid sequence, 171 residues long: ATP synthase subunit b (171 aa).

A helical membrane pass occupies residues Phe12–Tyr34.

The protein belongs to the ATPase B chain family. As to quaternary structure, F-type ATPases have 2 components, F(1) - the catalytic core - and F(0) - the membrane proton channel. F(1) has five subunits: alpha(3), beta(3), gamma(1), delta(1), epsilon(1). F(0) has four main subunits: a(1), b(1), b'(1) and c(10-14). The alpha and beta chains form an alternating ring which encloses part of the gamma chain. F(1) is attached to F(0) by a central stalk formed by the gamma and epsilon chains, while a peripheral stalk is formed by the delta, b and b' chains.

The protein localises to the cellular thylakoid membrane. F(1)F(0) ATP synthase produces ATP from ADP in the presence of a proton or sodium gradient. F-type ATPases consist of two structural domains, F(1) containing the extramembraneous catalytic core and F(0) containing the membrane proton channel, linked together by a central stalk and a peripheral stalk. During catalysis, ATP synthesis in the catalytic domain of F(1) is coupled via a rotary mechanism of the central stalk subunits to proton translocation. Its function is as follows. Component of the F(0) channel, it forms part of the peripheral stalk, linking F(1) to F(0). In Prochlorococcus marinus (strain SARG / CCMP1375 / SS120), this protein is ATP synthase subunit b.